A 39-amino-acid chain; its full sequence is Gonadal protein gdl-ORF39 (39 aa).

In terms of tissue distribution, in bundles of maturing sperm of larval, pupal and adult males.

The protein is Gonadal protein gdl-ORF39 (gdl-ORF39) of Drosophila melanogaster (Fruit fly).